The primary structure comprises 319 residues: ATP-dependent 6-phosphofructokinase (319 aa).

Gly11 contacts ATP. Residue 21 to 25 (RAVVR) participates in ADP binding. ATP contacts are provided by residues 72 to 73 (RC) and 102 to 105 (GDGS). Mg(2+) is bound at residue Asp103. 125-127 (TID) contacts substrate. Asp127 acts as the Proton acceptor in catalysis. Arg154 contributes to the ADP binding site. Residues Arg162 and 169–171 (MGR) each bind substrate. ADP contacts are provided by residues 185–187 (GAE), Arg211, and 213–215 (KKH). Residues Glu222, Arg243, and 249–252 (HVQR) each bind substrate.

It belongs to the phosphofructokinase type A (PFKA) family. ATP-dependent PFK group I subfamily. Prokaryotic clade 'B1' sub-subfamily. Homotetramer. It depends on Mg(2+) as a cofactor.

The protein localises to the cytoplasm. It catalyses the reaction beta-D-fructose 6-phosphate + ATP = beta-D-fructose 1,6-bisphosphate + ADP + H(+). It functions in the pathway carbohydrate degradation; glycolysis; D-glyceraldehyde 3-phosphate and glycerone phosphate from D-glucose: step 3/4. With respect to regulation, allosterically activated by ADP and other diphosphonucleosides, and allosterically inhibited by phosphoenolpyruvate. Its function is as follows. Catalyzes the phosphorylation of D-fructose 6-phosphate to fructose 1,6-bisphosphate by ATP, the first committing step of glycolysis. This is ATP-dependent 6-phosphofructokinase from Geobacillus kaustophilus (strain HTA426).